The primary structure comprises 470 residues: Proline--tRNA ligase (470 aa).

The protein belongs to the class-II aminoacyl-tRNA synthetase family. ProS type 3 subfamily. As to quaternary structure, homodimer.

The protein localises to the cytoplasm. The catalysed reaction is tRNA(Pro) + L-proline + ATP = L-prolyl-tRNA(Pro) + AMP + diphosphate. In terms of biological role, catalyzes the attachment of proline to tRNA(Pro) in a two-step reaction: proline is first activated by ATP to form Pro-AMP and then transferred to the acceptor end of tRNA(Pro). The polypeptide is Proline--tRNA ligase (Malacoplasma penetrans (strain HF-2) (Mycoplasma penetrans)).